Here is a 203-residue protein sequence, read N- to C-terminus: Thymidylate kinase (203 aa).

10-17 serves as a coordination point for ATP; sequence GVEGSGKT.

It belongs to the thymidylate kinase family.

The enzyme catalyses dTMP + ATP = dTDP + ADP. Its function is as follows. Phosphorylation of dTMP to form dTDP in both de novo and salvage pathways of dTTP synthesis. The protein is Thymidylate kinase of Carboxydothermus hydrogenoformans (strain ATCC BAA-161 / DSM 6008 / Z-2901).